A 117-amino-acid chain; its full sequence is Biofilm growth-associated repressor (117 aa).

An HTH arsR-type domain is found at 20–114; the sequence is AMEKRATEVA…ALYAIFCAPE (95 aa). Residues 54–77 constitute a DNA-binding region (H-T-H motif); the sequence is VGELEAKLDIRQPTLSQQLGVLRE.

Its function is as follows. Represses an operon that comprises at least itself and blh. Binds to a palindromic AT-rich sequence spanning the -10 region of the blh promoter and blocks transcription of the operon. This is Biofilm growth-associated repressor (bigR) from Agrobacterium fabrum (strain C58 / ATCC 33970) (Agrobacterium tumefaciens (strain C58)).